Consider the following 57-residue polypeptide: Potassium channel toxin alpha-KTx 23.3 (57 aa).

Positions 1 to 23 (MKMSIVIILLLFTCLIATNGASG) are cleaved as a signal peptide. Disulfide bonds link C26-C46, C32-C51, C36-C53, and C41-C56.

Belongs to the short scorpion toxin superfamily. Potassium channel inhibitor family. Alpha-KTx 23 subfamily. As to expression, expressed by the venom gland.

The protein resides in the secreted. Its function is as follows. This toxin shows both immunosuppressive and anti-inflammatory activities. It has the potential to inhibit human T cell activation, since it reduces IL-2 secretion and the expression of T cell activation marker CD69 and acts as an anti-inflammatory agent, since it provokes the reduction of secretion of both IFN-gamma and TNF-alpha. In vivo, the delayed-type hypersensitivity response in rat autoimmune disease model is ameliorated in the presence of this toxin. Acts by blocking Kv1.3/KCNA3 potassium channels of T-lymphocytes. The sequence is that of Potassium channel toxin alpha-KTx 23.3 from Scorpiops tibetanus (Scorpion).